We begin with the raw amino-acid sequence, 169 residues long: S-ribosylhomocysteine lyase (169 aa).

Fe cation is bound by residues H54, H58, and C128.

The protein belongs to the LuxS family. As to quaternary structure, homodimer. Fe cation is required as a cofactor.

The enzyme catalyses S-(5-deoxy-D-ribos-5-yl)-L-homocysteine = (S)-4,5-dihydroxypentane-2,3-dione + L-homocysteine. Its function is as follows. Involved in the synthesis of autoinducer 2 (AI-2) which is secreted by bacteria and is used to communicate both the cell density and the metabolic potential of the environment. The regulation of gene expression in response to changes in cell density is called quorum sensing. Catalyzes the transformation of S-ribosylhomocysteine (RHC) to homocysteine (HC) and 4,5-dihydroxy-2,3-pentadione (DPD). In Shewanella putrefaciens (strain CN-32 / ATCC BAA-453), this protein is S-ribosylhomocysteine lyase.